A 282-amino-acid chain; its full sequence is Large ribosomal subunit protein uL2 (282 aa).

Disordered regions lie at residues 31 to 55 (KRLT…RHIG) and 223 to 282 (LAMN…NTQR). Composition is skewed to basic residues over residues 34–55 (TKPV…RHIG) and 270–282 (VTRR…NTQR).

This sequence belongs to the universal ribosomal protein uL2 family. As to quaternary structure, part of the 50S ribosomal subunit. Forms a bridge to the 30S subunit in the 70S ribosome.

In terms of biological role, one of the primary rRNA binding proteins. Required for association of the 30S and 50S subunits to form the 70S ribosome, for tRNA binding and peptide bond formation. It has been suggested to have peptidyltransferase activity; this is somewhat controversial. Makes several contacts with the 16S rRNA in the 70S ribosome. The polypeptide is Large ribosomal subunit protein uL2 (Anaeromyxobacter dehalogenans (strain 2CP-C)).